The sequence spans 628 residues: Phosphomethylpyrimidine synthase (628 aa).

Polar residues predominate over residues 1 to 14 (MTISDIGSQATTHT). Residues 1–37 (MTISDIGSQATTHTPVKASKADALKTPAHRSETDARF) form a disordered region. Over residues 19 to 37 (SKADALKTPAHRSETDARF) the composition is skewed to basic and acidic residues. Substrate-binding positions include N260, M289, Y318, H354, 374-376 (SRG), 415-418 (DGLR), and E454. H458 is a binding site for Zn(2+). Y481 lines the substrate pocket. H522 contacts Zn(2+). [4Fe-4S] cluster-binding residues include C602, C605, and C610.

The protein belongs to the ThiC family. As to quaternary structure, homodimer. [4Fe-4S] cluster serves as cofactor.

It carries out the reaction 5-amino-1-(5-phospho-beta-D-ribosyl)imidazole + S-adenosyl-L-methionine = 4-amino-2-methyl-5-(phosphooxymethyl)pyrimidine + CO + 5'-deoxyadenosine + formate + L-methionine + 3 H(+). It functions in the pathway cofactor biosynthesis; thiamine diphosphate biosynthesis. In terms of biological role, catalyzes the synthesis of the hydroxymethylpyrimidine phosphate (HMP-P) moiety of thiamine from aminoimidazole ribotide (AIR) in a radical S-adenosyl-L-methionine (SAM)-dependent reaction. The sequence is that of Phosphomethylpyrimidine synthase from Psychrobacter cryohalolentis (strain ATCC BAA-1226 / DSM 17306 / VKM B-2378 / K5).